The following is a 117-amino-acid chain: MKFQYKEDHPFEYRKKEGEKIRKKYPDRVPVIVEKAPKARVPDLDKRKYLVPSDLTVGQFYFLIRKRIHLRPEDALFFFVNNTIPPTSATMGQLYEDNHEEDYFLYVAYSDESVYGK.

Gly-116 carries the Phosphatidylethanolamine amidated glycine; alternate lipid modification. Gly-116 carries Phosphatidylserine amidated glycine; alternate lipidation. Residue Lys-117 is a propeptide, removed in mature form.

It belongs to the ATG8 family. As to quaternary structure, interacts with ATG13, OPRK1, RB1CC1 and ULK1. Interacts with TP53INP1 and TP53INP2. Directly interacts with SQSTM1. Interacts with ATG3, ATG7 and MAP15. Interacts with TECPR2. Interacts with TBC1D5. Interacts with MAPK15. Interacts with TRIM5. Interacts with MEFV and TRIM21. Interacts with WDFY3. Interacts with the reticulophagy receptor TEX264. Interacts with UBA5. Interacts with KBTBD6 and KBTBD7; the interaction is direct. Interacts with reticulophagy regulators RETREG1, RETREG2 and RETREG3. Interacts with IRGM. Interacts with DNM2. Interacts with NCOA4 (via C-terminus). Post-translationally, the precursor molecule is cleaved by ATG4 (ATG4A, ATG4B, ATG4C or ATG4D) to expose the glycine at the C-terminus and form the cytosolic form, GABARAPL1-I. The processed form is then activated by APG7L/ATG7, transferred to ATG3 and conjugated to phosphatidylethanolamine (PE) phospholipid to form the membrane-bound form, GABARAPL1-II. During non-canonical autophagy, the processed form is conjugated to phosphatidylserine (PS) phospholipid. ATG4 proteins also mediate the delipidation of PE-conjugated forms required for GABARAPL1 recycling when autophagosomes fuse with lysosomes. In addition, ATG4B and ATG4D mediate delipidation of ATG8 proteins conjugated to PS during non-canonical autophagy. ATG4B constitutes the major protein for proteolytic activation. ATG4D is the main enzyme for delipidation activity.

Its subcellular location is the cytoplasmic vesicle. The protein resides in the autophagosome. It is found in the cytoplasmic vesicle membrane. The protein localises to the cytoplasm. It localises to the cytoskeleton. Its subcellular location is the endoplasmic reticulum. The protein resides in the golgi apparatus. Functionally, ubiquitin-like modifier that increases cell-surface expression of kappa-type opioid receptor through facilitating anterograde intracellular trafficking of the receptor. Involved in formation of autophagosomal vacuoles. While LC3s are involved in elongation of the phagophore membrane, the GABARAP/GATE-16 subfamily is essential for a later stage in autophagosome maturation. Through its interaction with the reticulophagy receptor TEX264, participates in the remodeling of subdomains of the endoplasmic reticulum into autophagosomes upon nutrient stress, which then fuse with lysosomes for endoplasmic reticulum turnover. The polypeptide is Gamma-aminobutyric acid receptor-associated protein-like 1 (Bos taurus (Bovine)).